We begin with the raw amino-acid sequence, 473 residues long: Putative tyrosine recombinase XerC (473 aa).

A Core-binding (CB) domain is found at 4-82; it reads MTLPELTQEY…HLRTVYRYAM (79 aa). Residues 118–305 enclose the Tyr recombinase domain; it reads RNWLRFLVQE…DYDLMREVMN (188 aa). Catalysis depends on residues R156, K183, H256, R259, and H283. Catalysis depends on Y292, which acts as the O-(3'-phospho-DNA)-tyrosine intermediate. The segment covering 341-352 has biased composition (polar residues); it reads SGTELQPATTES. The segment at 341-365 is disordered; sequence SGTELQPATTESSEAKKADDTASNP.

Belongs to the 'phage' integrase family.

It localises to the cytoplasm. Its function is as follows. Site-specific tyrosine recombinase, which acts by catalyzing the cutting and rejoining of the recombining DNA molecules. This Pseudomonas syringae protein is Putative tyrosine recombinase XerC.